Here is a 284-residue protein sequence, read N- to C-terminus: MKLDGYTRLTAVVANPIKHSISPFIHNRAFEATATNGAYVAWEIEASDLAETVANIRRYQMFGINLSMPYKEQVIPYLDKLSDEARLIGAVNTVVNENGNLIGYNTDGKGFFKCLPSFTISGKKMTLLGAGGAAKSILAQAILDGVSQISVFVRSVSMEKTRPYLDKLQEQTGFKVDLCALEYVSELQARIAESDLLVNATSVGMDGQSSPVPENIVLPETLLVADIIYQPFETPFLKWARSQGNPAVNGLGMLLYQAAEAFQLWTGKEMPTEEIWQSLTEKYQ.

Shikimate-binding positions include 20-22 (SIS) and S67. Residue K71 is the Proton acceptor of the active site. NADP(+) is bound at residue D83. Shikimate-binding residues include N92 and D107. NADP(+) is bound by residues 129 to 133 (GAGGA) and I227. Residue Y229 coordinates shikimate. G250 contacts NADP(+).

Belongs to the shikimate dehydrogenase family. Homodimer.

The catalysed reaction is shikimate + NADP(+) = 3-dehydroshikimate + NADPH + H(+). It participates in metabolic intermediate biosynthesis; chorismate biosynthesis; chorismate from D-erythrose 4-phosphate and phosphoenolpyruvate: step 4/7. Functionally, involved in the biosynthesis of the chorismate, which leads to the biosynthesis of aromatic amino acids. Catalyzes the reversible NADPH linked reduction of 3-dehydroshikimate (DHSA) to yield shikimate (SA). The chain is Shikimate dehydrogenase (NADP(+)) from Streptococcus pneumoniae (strain Taiwan19F-14).